Here is a 357-residue protein sequence, read N- to C-terminus: Crh-like protein 1 (357 aa).

The signal sequence occupies residues 1–17 (MMLPLLAVSAFASLGAA). The GH16 domain occupies 20–220 (YTSCNPTNSL…WAGGETDYDE (201 aa)). Asparagine 52 and asparagine 92 each carry an N-linked (GlcNAc...) asparagine glycan. Glutamate 109 serves as the catalytic Nucleophile. Glutamate 113 functions as the Proton donor in the catalytic mechanism. Glutamate 113 provides a ligand contact to chitin. An N-linked (GlcNAc...) asparagine glycan is attached at asparagine 131. Residues lysine 193, tryptophan 197, and threonine 208 each contribute to the chitin site. N-linked (GlcNAc...) asparagine glycosylation is found at asparagine 242 and asparagine 257. A lipid anchor (GPI-anchor amidated glycine) is attached at glycine 326. Positions 327–357 (SASAVFTGAAVTNLPSFFFTVFFALAIALAF) are cleaved as a propeptide — removed in mature form. A helical membrane pass occupies residues 337 to 357 (VTNLPSFFFTVFFALAIALAF).

It belongs to the glycosyl hydrolase 16 family. CRH1 subfamily. The GPI-like anchor contains a phosphoceramide lipid group. The anchor position has not been determined.

The protein resides in the cell membrane. It localises to the secreted. Its subcellular location is the cell wall. The enzyme catalyses Random endo-hydrolysis of N-acetyl-beta-D-glucosaminide (1-&gt;4)-beta-linkages in chitin and chitodextrins.. Dual chitinase/transglycosylase that plays a role in cell wall architecture. Chitinase and transglycosylase activities are coupled. Required for the polysaccharide cross-linking at the septa and the cell wall. More specifically, transfers chitin to 1,6-beta-glucan in the cell wall. This Aspergillus fumigatus (strain ATCC MYA-4609 / CBS 101355 / FGSC A1100 / Af293) (Neosartorya fumigata) protein is Crh-like protein 1.